An 82-amino-acid polypeptide reads, in one-letter code: Small ribosomal subunit protein uS17 (82 aa).

It belongs to the universal ribosomal protein uS17 family. In terms of assembly, part of the 30S ribosomal subunit.

Its function is as follows. One of the primary rRNA binding proteins, it binds specifically to the 5'-end of 16S ribosomal RNA. The protein is Small ribosomal subunit protein uS17 of Aeromonas hydrophila subsp. hydrophila (strain ATCC 7966 / DSM 30187 / BCRC 13018 / CCUG 14551 / JCM 1027 / KCTC 2358 / NCIMB 9240 / NCTC 8049).